Reading from the N-terminus, the 267-residue chain is Type II pantothenate kinase (267 aa).

6 to 13 (DAGGTLIK) lines the ATP pocket. Glu-70 (proton acceptor) is an active-site residue. ATP-binding positions include Thr-99, 121 to 125 (GGMIQ), Tyr-137, and Ser-225.

The protein belongs to the type II pantothenate kinase family. In terms of assembly, homodimer.

It localises to the cytoplasm. The enzyme catalyses (R)-pantothenate + ATP = (R)-4'-phosphopantothenate + ADP + H(+). The protein operates within cofactor biosynthesis; coenzyme A biosynthesis; CoA from (R)-pantothenate: step 1/5. Functionally, catalyzes the phosphorylation of pantothenate (Pan), the first step in CoA biosynthesis. The protein is Type II pantothenate kinase of Staphylococcus aureus (strain bovine RF122 / ET3-1).